The sequence spans 160 residues: SsrA-binding protein (160 aa).

It belongs to the SmpB family.

The protein resides in the cytoplasm. Its function is as follows. Required for rescue of stalled ribosomes mediated by trans-translation. Binds to transfer-messenger RNA (tmRNA), required for stable association of tmRNA with ribosomes. tmRNA and SmpB together mimic tRNA shape, replacing the anticodon stem-loop with SmpB. tmRNA is encoded by the ssrA gene; the 2 termini fold to resemble tRNA(Ala) and it encodes a 'tag peptide', a short internal open reading frame. During trans-translation Ala-aminoacylated tmRNA acts like a tRNA, entering the A-site of stalled ribosomes, displacing the stalled mRNA. The ribosome then switches to translate the ORF on the tmRNA; the nascent peptide is terminated with the 'tag peptide' encoded by the tmRNA and targeted for degradation. The ribosome is freed to recommence translation, which seems to be the essential function of trans-translation. This chain is SsrA-binding protein, found in Erwinia tasmaniensis (strain DSM 17950 / CFBP 7177 / CIP 109463 / NCPPB 4357 / Et1/99).